Consider the following 430-residue polypeptide: Asparagine--tRNA ligase (430 aa).

This sequence belongs to the class-II aminoacyl-tRNA synthetase family. In terms of assembly, homodimer.

It is found in the cytoplasm. The enzyme catalyses tRNA(Asn) + L-asparagine + ATP = L-asparaginyl-tRNA(Asn) + AMP + diphosphate + H(+). The chain is Asparagine--tRNA ligase from Staphylococcus aureus (strain MW2).